The sequence spans 149 residues: Large ribosomal subunit protein bL9 (149 aa).

Belongs to the bacterial ribosomal protein bL9 family.

In terms of biological role, binds to the 23S rRNA. This is Large ribosomal subunit protein bL9 from Histophilus somni (strain 129Pt) (Haemophilus somnus).